We begin with the raw amino-acid sequence, 518 residues long: Vesicular inhibitory amino acid transporter (518 aa).

Over M1 to M125 the chain is Cytoplasmic. A helical membrane pass occupies residues F126–I146. At F147–R197 the chain is on the lumenal, vesicle side. A helical transmembrane segment spans residues V198–S218. Over G219–K258 the chain is Cytoplasmic. Residues F259–L279 form a helical membrane-spanning segment. Residues S280 to K298 lie on the Lumenal, vesicle side of the membrane. The helical transmembrane segment at F299–L319 threads the bilayer. Over E320–N334 the chain is Cytoplasmic. Residues W335–W355 traverse the membrane as a helical segment. Residues A356–N376 are Lumenal, vesicle-facing. Residues L377 to V397 traverse the membrane as a helical segment. Over L398–A431 the chain is Cytoplasmic. The chain crosses the membrane as a helical span at residues L432–L452. Over T453–G454 the chain is Lumenal, vesicle. A helical membrane pass occupies residues S455 to W475. Topologically, residues R476–Q482 are cytoplasmic. Residues V483–H503 traverse the membrane as a helical segment. Residues S504–D518 lie on the Lumenal, vesicle side of the membrane.

The protein belongs to the amino acid/polyamine transporter 2 family. As to expression, initially expressed in late neurula stages in the anterior spinal cord. By early tailbud stages, expression extends posteriorly along the entire developing spinal cord and appears in the hindbrain. In late tailbud embryos, expressed in the forebrain, midbrain, hindbrain, spinal cord and retina. In swimming tadpoles, expressed in an extended and more intense pattern including interneurons.

It is found in the cytoplasmic vesicle membrane. The protein resides in the presynapse. The enzyme catalyses 4-aminobutanoate(out) + n H(+)(in) = 4-aminobutanoate(in) + n H(+)(out). The catalysed reaction is glycine(out) + n H(+)(in) = glycine(in) + n H(+)(out). It catalyses the reaction beta-alanine(out) + n H(+)(in) = beta-alanine(in) + n H(+)(out). Antiporter that exchanges vesicular protons for cytosolic 4-aminobutanoate or to a lesser extend glycine, thus allowing their secretion from nerve terminals. The transport is equally dependent on the chemical and electrical components of the proton gradient. May also transport beta-alanine. Acidification of GABAergic synaptic vesicles is a prerequisite for 4-aminobutanoate uptake. In Xenopus laevis (African clawed frog), this protein is Vesicular inhibitory amino acid transporter.